A 349-amino-acid polypeptide reads, in one-letter code: Putative transport protein jhp_0514 (349 aa).

The next 8 helical transmembrane spans lie at 6 to 26, 27 to 47, 56 to 76, 143 to 163, 195 to 215, 224 to 244, 258 to 278, and 300 to 320; these read FFWILFLIGFYWMLYLYQDFL, MDALIAGLLCVGLFQVKVFLN, SFLCVLVLASVVIVPLYFIVY, LKLVTDALFILGLLFFFFYYG, VLLTSLITVILEGVAFGTMII, LGILYGLASLVPAVGGALIWI, EAIFIVLYSILLIGVLIDSVI, and ILIFFSMIAGISQFGFWGIIV.

This sequence belongs to the autoinducer-2 exporter (AI-2E) (TC 2.A.86) family.

Its subcellular location is the cell membrane. The protein is Putative transport protein jhp_0514 of Helicobacter pylori (strain J99 / ATCC 700824) (Campylobacter pylori J99).